Here is an 858-residue protein sequence, read N- to C-terminus: Bifunctional uridylyltransferase/uridylyl-removing enzyme (858 aa).

Positions 1–324 (MSASVAEPPP…PATSGVTRVL (324 aa)) are uridylyltransferase. A uridylyl-removing region spans residues 325 to 681 (SPGRFVEKQG…ARPSPVGDAL (357 aa)). One can recognise an HD domain in the interval 443–565 (VDQHILMVLR…VGSERRLTAL (123 aa)). ACT domains are found at residues 682 to 761 (QVLV…PEPS) and 790 to 858 (ILSV…AIAV).

It belongs to the GlnD family. Mg(2+) is required as a cofactor.

The catalysed reaction is [protein-PII]-L-tyrosine + UTP = [protein-PII]-uridylyl-L-tyrosine + diphosphate. The enzyme catalyses [protein-PII]-uridylyl-L-tyrosine + H2O = [protein-PII]-L-tyrosine + UMP + H(+). Its activity is regulated as follows. Uridylyltransferase (UTase) activity is inhibited by glutamine, while glutamine activates uridylyl-removing (UR) activity. In terms of biological role, modifies, by uridylylation and deuridylylation, the PII regulatory proteins (GlnB and homologs), in response to the nitrogen status of the cell that GlnD senses through the glutamine level. Under low glutamine levels, catalyzes the conversion of the PII proteins and UTP to PII-UMP and PPi, while under higher glutamine levels, GlnD hydrolyzes PII-UMP to PII and UMP (deuridylylation). Thus, controls uridylylation state and activity of the PII proteins, and plays an important role in the regulation of nitrogen assimilation and metabolism. The polypeptide is Bifunctional uridylyltransferase/uridylyl-removing enzyme (Burkholderia mallei (strain ATCC 23344)).